Here is a 357-residue protein sequence, read N- to C-terminus: Dihydroorotate dehydrogenase (quinone) (357 aa).

FMN is bound by residues 66-70 and T90; that span reads AGFDK. K70 serves as a coordination point for substrate. 115-119 lines the substrate pocket; it reads NRMGF. The FMN site is built by N143 and N176. N176 is a binding site for substrate. Residue S179 is the Nucleophile of the active site. N181 is a binding site for substrate. Residues K212 and T240 each coordinate FMN. 241–242 provides a ligand contact to substrate; the sequence is NT. Residues G264, G293, and 314 to 315 contribute to the FMN site; that span reads YT.

This sequence belongs to the dihydroorotate dehydrogenase family. Type 2 subfamily. In terms of assembly, monomer. It depends on FMN as a cofactor.

Its subcellular location is the cell membrane. It carries out the reaction (S)-dihydroorotate + a quinone = orotate + a quinol. The protein operates within pyrimidine metabolism; UMP biosynthesis via de novo pathway; orotate from (S)-dihydroorotate (quinone route): step 1/1. Its function is as follows. Catalyzes the conversion of dihydroorotate to orotate with quinone as electron acceptor. The protein is Dihydroorotate dehydrogenase (quinone) of Mycobacterium bovis (strain BCG / Pasteur 1173P2).